We begin with the raw amino-acid sequence, 319 residues long: ATP-dependent 6-phosphofructokinase (319 aa).

Residues Gly-11, 72-73 (RS), and 102-105 (GDGS) contribute to the ATP site. A Mg(2+)-binding site is contributed by Asp-103. Residue 126–128 (TID) participates in substrate binding. The active-site Proton acceptor is the Asp-128. Arg-155 contacts ADP. Substrate is bound by residues Arg-163 and 170–172 (MGR). Residue 186–188 (GAE) participates in ADP binding. Substrate is bound by residues Glu-223, Arg-245, and 251-254 (HTQR).

This sequence belongs to the phosphofructokinase type A (PFKA) family. ATP-dependent PFK group I subfamily. Prokaryotic clade 'B1' sub-subfamily. In terms of assembly, homotetramer. It depends on Mg(2+) as a cofactor.

The protein resides in the cytoplasm. It carries out the reaction beta-D-fructose 6-phosphate + ATP = beta-D-fructose 1,6-bisphosphate + ADP + H(+). It functions in the pathway carbohydrate degradation; glycolysis; D-glyceraldehyde 3-phosphate and glycerone phosphate from D-glucose: step 3/4. Its activity is regulated as follows. Allosterically activated by ADP and other diphosphonucleosides, and allosterically inhibited by phosphoenolpyruvate. Its function is as follows. Catalyzes the phosphorylation of D-fructose 6-phosphate to fructose 1,6-bisphosphate by ATP, the first committing step of glycolysis. The sequence is that of ATP-dependent 6-phosphofructokinase from Sulfurimonas denitrificans (strain ATCC 33889 / DSM 1251) (Thiomicrospira denitrificans (strain ATCC 33889 / DSM 1251)).